Reading from the N-terminus, the 152-residue chain is Xanthine-guanine phosphoribosyltransferase (152 aa).

5-phospho-alpha-D-ribose 1-diphosphate-binding positions include 37-38 (RG), Arg-69, and 88-96 (DDLVDSGDT). Position 69 (Arg-69) interacts with GMP. Asp-89 lines the Mg(2+) pocket. The guanine site is built by Asp-92 and Ile-135. 2 residues coordinate xanthine: Asp-92 and Ile-135. GMP-binding positions include 92–96 (DSGDT) and 134–135 (WI).

Belongs to the purine/pyrimidine phosphoribosyltransferase family. XGPT subfamily. In terms of assembly, homotetramer. The cofactor is Mg(2+).

It is found in the cell inner membrane. The catalysed reaction is GMP + diphosphate = guanine + 5-phospho-alpha-D-ribose 1-diphosphate. It carries out the reaction XMP + diphosphate = xanthine + 5-phospho-alpha-D-ribose 1-diphosphate. It catalyses the reaction IMP + diphosphate = hypoxanthine + 5-phospho-alpha-D-ribose 1-diphosphate. The protein operates within purine metabolism; GMP biosynthesis via salvage pathway; GMP from guanine: step 1/1. Its pathway is purine metabolism; XMP biosynthesis via salvage pathway; XMP from xanthine: step 1/1. Its function is as follows. Purine salvage pathway enzyme that catalyzes the transfer of the ribosyl-5-phosphate group from 5-phospho-alpha-D-ribose 1-diphosphate (PRPP) to the N9 position of the 6-oxopurines guanine and xanthine to form the corresponding ribonucleotides GMP (guanosine 5'-monophosphate) and XMP (xanthosine 5'-monophosphate), with the release of PPi. To a lesser extent, also acts on hypoxanthine. The chain is Xanthine-guanine phosphoribosyltransferase from Aliivibrio salmonicida (strain LFI1238) (Vibrio salmonicida (strain LFI1238)).